The chain runs to 656 residues: Threonine--tRNA ligase (656 aa).

The TGS domain occupies 1-64 (MAEAASLTFP…ERSGKIEIIT (64 aa)). The segment at 246–548 (DHRRLGREMD…LIENYAGHFP (303 aa)) is catalytic. Cys-342, His-393, and His-525 together coordinate Zn(2+).

The protein belongs to the class-II aminoacyl-tRNA synthetase family. Homodimer. The cofactor is Zn(2+).

The protein resides in the cytoplasm. It carries out the reaction tRNA(Thr) + L-threonine + ATP = L-threonyl-tRNA(Thr) + AMP + diphosphate + H(+). In terms of biological role, catalyzes the attachment of threonine to tRNA(Thr) in a two-step reaction: L-threonine is first activated by ATP to form Thr-AMP and then transferred to the acceptor end of tRNA(Thr). Also edits incorrectly charged L-seryl-tRNA(Thr). This chain is Threonine--tRNA ligase, found in Chelativorans sp. (strain BNC1).